We begin with the raw amino-acid sequence, 205 residues long: Small ribosomal subunit protein uS4 (205 aa).

A disordered region spans residues 18 to 46; it reads NIWGRPKSPVNRREYGPGQHGQRRKGKLS. Positions 94-157 constitute an S4 RNA-binding domain; it reads RRLDTVVYRA…KQLTFVLEAN (64 aa).

Belongs to the universal ribosomal protein uS4 family. Part of the 30S ribosomal subunit. Contacts protein S5. The interaction surface between S4 and S5 is involved in control of translational fidelity.

In terms of biological role, one of the primary rRNA binding proteins, it binds directly to 16S rRNA where it nucleates assembly of the body of the 30S subunit. Its function is as follows. With S5 and S12 plays an important role in translational accuracy. The chain is Small ribosomal subunit protein uS4 from Rhodopseudomonas palustris (strain BisB18).